Here is a 388-residue protein sequence, read N- to C-terminus: 5-hydroxytryptamine receptor 4 (388 aa).

At 1–19 the chain is on the extracellular side; the sequence is MDKLDANVSSKEGFGSVEK. An N-linked (GlcNAc...) asparagine glycan is attached at Asn-7. The helical transmembrane segment at 20–44 threads the bilayer; it reads VVLLTFLSAVILMAILGNLLVMVAV. Over 45–54 the chain is Cytoplasmic; the sequence is CRDRQLRKIK. Residues 55 to 78 traverse the membrane as a helical segment; it reads TNYFIVSLAFADLLVSVLVMPFGA. Residues 79–92 are Extracellular-facing; it reads IELVQDIWVYGEMF. Residues 93–117 form a helical membrane-spanning segment; sequence CLVRTSLDVLLTTASIFHLCCISLD. An intrachain disulfide couples Cys-93 to Cys-184. Asp-100 provides a ligand contact to serotonin. At 118 to 133 the chain is on the cytoplasmic side; sequence RYYAICCQPLVYRNKM. A helical transmembrane segment spans residues 134–157; it reads TPLRIALMLGGCWVIPMFISFLPI. Over 158–188 the chain is Extracellular; the sequence is MQGWNNIGIVDLIEKRKFNQNSNSTYCVFMV. The chain crosses the membrane as a helical span at residues 189-212; that stretch reads NKPYAITCSVVAFYIPFLLMVLAY. The Cytoplasmic portion of the chain corresponds to 213–257; the sequence is YRIYVTAKEHARQIQVLQRAGAPAEGRPQPADQHSTHRMRTETKA. Residues 258-283 form a helical membrane-spanning segment; that stretch reads AKTLCIIMGCFCLCWAPFFVTNIVDP. Asn-279 serves as a coordination point for serotonin. The Extracellular segment spans residues 284–290; it reads FIDYTVP. The chain crosses the membrane as a helical span at residues 291–314; sequence GQLWTAFLWLGYINSGLNPFLYAF. Over 315-388 the chain is Cytoplasmic; sequence LNKSFRRAFL…PLVAAQPIDT (74 aa).

Belongs to the G-protein coupled receptor 1 family. In terms of assembly, interacts (via C-terminus 330-346 AA) with GRK5; this interaction is promoted by 5-HT (serotonin).

The protein localises to the cell membrane. It is found in the endosome membrane. In terms of biological role, G-protein coupled receptor for 5-hydroxytryptamine (serotonin), a biogenic hormone that functions as a neurotransmitter, a hormone and a mitogen. Ligand binding causes a conformation change that triggers signaling via guanine nucleotide-binding proteins (G proteins) and modulates the activity of downstream effectors. HTR4 is coupled to G(s) G alpha proteins and mediates activation of adenylate cyclase activity. This is 5-hydroxytryptamine receptor 4 (HTR4) from Cavia porcellus (Guinea pig).